Reading from the N-terminus, the 93-residue chain is Alpha-defensin 10 (93 aa).

Residues Met1 to Ala19 form the signal peptide. Positions Asp20–Ser58 are excised as a propeptide. The disordered stretch occupies residues Ile22–Glu56. 3 disulfides stabilise this stretch: Cys64/Cys92, Cys66/Cys81, and Cys71/Cys91.

It belongs to the alpha-defensin family. Paneth cells of the small bowel.

Its subcellular location is the secreted. Functionally, probably contributes to the antimicrobial barrier function of the small bowel mucosa. The protein is Alpha-defensin 10 (Defa10) of Mus musculus (Mouse).